Consider the following 502-residue polypeptide: MSIKPEEISSLIKQQIESFQSDVQVQDVGTVIRVGDGIALAHGLENVMAGELLEFSNGVMGMAQNLEENNIGIIILGPYTDIREGDEVKRTGRIMEVPVGEELLGRVVNPLGQPIDGLGPIATTKSRPIESPAPGVMDRKSVHEPLQTGIKSIDTMIPIGRGQRELIIGDRQTGKTAIAIDTILNQKDEDMICIYVAIGQKDSTVAGVVETLRQRGALDYTIVVSASASDPAPMLFLAPYAGVSMGEEFMYNGKHVLVIYDDLSKQASAYRELSLLLRRPPGREAFPGDVFYLHSRLLERAAKLSDAKGGGSITALPFIETQAGDVSAYIPTNVISITDGQIFLQSDLFYSGIRPAVNAGLSVSRVGGSAQIKAMKKVSGTLRLDLAAYRELEAFAQFGSDLDKATQAKLNRGQRTVEVLKQDLHNPLPVEKQVAIIYALTKGFMDDIPVEDVQRFESEFFTFLDHNKKDLLDHIRTTGNLPEDADFKAAIEEFKKGFSASK.

The interval 119–139 (GPIATTKSRPIESPAPGVMDR) is disordered. Position 169 to 176 (169 to 176 (GDRQTGKT)) interacts with ATP.

The protein belongs to the ATPase alpha/beta chains family. F-type ATPases have 2 components, CF(1) - the catalytic core - and CF(0) - the membrane proton channel. CF(1) has five subunits: alpha(3), beta(3), gamma(1), delta(1), epsilon(1). CF(0) has three main subunits: a(1), b(2) and c(9-12). The alpha and beta chains form an alternating ring which encloses part of the gamma chain. CF(1) is attached to CF(0) by a central stalk formed by the gamma and epsilon chains, while a peripheral stalk is formed by the delta and b chains.

The protein resides in the cell membrane. The catalysed reaction is ATP + H2O + 4 H(+)(in) = ADP + phosphate + 5 H(+)(out). Its function is as follows. Produces ATP from ADP in the presence of a proton gradient across the membrane. The alpha chain is a regulatory subunit. This chain is ATP synthase subunit alpha, found in Alkalihalophilus pseudofirmus (strain ATCC BAA-2126 / JCM 17055 / OF4) (Bacillus pseudofirmus).